The primary structure comprises 525 residues: Protein-export membrane protein SecD (525 aa).

6 consecutive transmembrane segments (helical) span residues 16–36, 368–388, 395–415, 421–441, 466–486, and 488–508; these read VLLL…KGLT, QAII…YFHY, IPVA…AALI, LPSI…QIVI, AFFI…FLLV, and FVGT…IGVL.

The protein belongs to the SecD/SecF family. SecD subfamily. As to quaternary structure, part of the protein translocation apparatus. Forms a complex with SecF.

Its subcellular location is the cell membrane. In terms of biological role, involved in protein export. The chain is Protein-export membrane protein SecD from Thermococcus gammatolerans (strain DSM 15229 / JCM 11827 / EJ3).